A 304-amino-acid polypeptide reads, in one-letter code: Quinolinate synthase 1 (304 aa).

2 residues coordinate iminosuccinate: histidine 24 and serine 41. Cysteine 86 contacts [4Fe-4S] cluster. Residues 112 to 114 and serine 129 each bind iminosuccinate; that span reads YVN. Position 171 (cysteine 171) interacts with [4Fe-4S] cluster. Residues 197–199 and threonine 214 each bind iminosuccinate; that span reads HPE. Position 259 (cysteine 259) interacts with [4Fe-4S] cluster.

Belongs to the quinolinate synthase family. Type 2 subfamily. Requires [4Fe-4S] cluster as cofactor.

It is found in the cytoplasm. It catalyses the reaction iminosuccinate + dihydroxyacetone phosphate = quinolinate + phosphate + 2 H2O + H(+). It functions in the pathway cofactor biosynthesis; NAD(+) biosynthesis; quinolinate from iminoaspartate: step 1/1. Its function is as follows. Catalyzes the condensation of iminoaspartate with dihydroxyacetone phosphate to form quinolinate. The sequence is that of Quinolinate synthase 1 from Methanosarcina acetivorans (strain ATCC 35395 / DSM 2834 / JCM 12185 / C2A).